A 433-amino-acid chain; its full sequence is MSFKDLGVSKWLLEALAAMKIRSPTSIQAECIPQILAGRDCIGGAKTGSGKTIAFAAPMMTKWSEDPFGIYGLVLTPTRELALQIAEQFLALGASMNIKVAVVVGGEDMVKQALEIQKSPHFIIATPGRLADHILNSGDDTVGGLKRIKFLVLDEADRLLSNSFGSDLERCFKILPDASKRQTLLFTATVTDAVRALKDKPVPEGKKPVFIHEIVSKDQVAIPATLTISYVFVPSYVKEAYLHNILVSPKYEKASAIVFVNRTYTAEILRRTLRKLDIRVASLHSEMPQSERTNSLHRFRAGAARVLIATDVASRGLDIPNVELVVNQDIPADPDDYIHRVGRTARAGKKGGSVSIVSEKDVERILAIENHINKKMDLLEEVNDDKIIKESLSIVTAAKRESVADMEKEGFGEKRKINKRKREERTRDSKKRK.

The Q motif signature appears at 1–29; sequence MSFKDLGVSKWLLEALAAMKIRSPTSIQA. One can recognise a Helicase ATP-binding domain in the interval 32–208; the sequence is IPQILAGRDC…DKPVPEGKKP (177 aa). 45–52 serves as a coordination point for ATP; sequence AKTGSGKT. The DEAD box motif lies at 154 to 157; sequence DEAD. One can recognise a Helicase C-terminal domain in the interval 247 to 387; it reads VSPKYEKASA…LLEEVNDDKI (141 aa). The span at 401 to 427 shows a compositional bias: basic and acidic residues; sequence ESVADMEKEGFGEKRKINKRKREERTR. A disordered region spans residues 401–433; the sequence is ESVADMEKEGFGEKRKINKRKREERTRDSKKRK.

Belongs to the DEAD box helicase family. DDX49/DBP8 subfamily.

The protein resides in the nucleus. Its subcellular location is the nucleolus. The catalysed reaction is ATP + H2O = ADP + phosphate + H(+). Functionally, ATP-binding RNA helicase involved in 40S ribosomal subunit biogenesis and is required for the normal formation of 18S rRNAs through pre-rRNA processing at A0, A1 and A2 sites. Required for vegetative growth. This chain is ATP-dependent RNA helicase DBP8 (DBP8), found in Meyerozyma guilliermondii (strain ATCC 6260 / CBS 566 / DSM 6381 / JCM 1539 / NBRC 10279 / NRRL Y-324) (Yeast).